The sequence spans 1129 residues: Phytochrome A (1129 aa).

One can recognise a GAF domain in the interval 217–399 (SMERLCDTMV…VFAIHVSKEL (183 aa)). Position 322 (C322) interacts with phytochromobilin. PAS domains lie at 622 to 692 (VTSE…LQGK) and 755 to 826 (DYKA…VNLG). Positions 906 to 1123 (YLRRQAKNPL…TFIITVELAA (218 aa)) constitute a Histidine kinase domain.

Belongs to the phytochrome family. As to quaternary structure, homodimer. Post-translationally, contains one covalently linked phytochromobilin chromophore.

Regulatory photoreceptor which exists in two forms that are reversibly interconvertible by light: the Pr form that absorbs maximally in the red region of the spectrum and the Pfr form that absorbs maximally in the far-red region. Photoconversion of Pr to Pfr induces an array of morphogenic responses, whereas reconversion of Pfr to Pr cancels the induction of those responses. Pfr controls the expression of a number of nuclear genes including those encoding the small subunit of ribulose-bisphosphate carboxylase, chlorophyll A/B binding protein, protochlorophyllide reductase, rRNA, etc. It also controls the expression of its own gene(s) in a negative feedback fashion. The polypeptide is Phytochrome A (PHYA) (Petroselinum crispum (Parsley)).